Reading from the N-terminus, the 267-residue chain is REH2-associated factor 2 (267 aa).

Component of the REH2-associated complex (REH2C) composed of helicase REH2, associated factors H2F1 and H2F2, and mRNAs at various editing stages; the formation of the complex is RNA-independent. Interacts with various editing complexes including the RNA editing core (RECC) complex, the gRNA-binding (GRBC) complex (also known as the MRB1 complex) and the RNA editing mediator (REMC) complex.

Its subcellular location is the mitochondrion. In terms of biological role, may play a role in mitochondrial mRNA editing by facilitating the association of the gRNA-binding (GRBC) complex with the RNA editing core (RECC) complex. However, appears to be dispensable for mRNA editing per se. This Trypanosoma brucei brucei (strain 927/4 GUTat10.1) protein is REH2-associated factor 2.